We begin with the raw amino-acid sequence, 399 residues long: Unsaturated chondroitin disaccharide hydrolase (399 aa).

Asp-116 (nucleophile) is an active-site residue. Positions 116, 176, 234, 236, 248, 252, 366, and 369 each coordinate substrate. The Proton donor role is filled by Asp-176.

Belongs to the glycosyl hydrolase 88 family. As to quaternary structure, monomer.

The enzyme catalyses beta-D-4-deoxy-Delta(4)-GlcpA-(1-&gt;3)-beta-D-GalpNAc6S + H2O = N-acetyl-beta-D-galactosamine 6-sulfate + 5-dehydro-4-deoxy-D-glucuronate. Its function is as follows. Catalyzes the hydrolysis of unsaturated hyaluronate and chondroitin disaccharides. Also degrades unsaturated heparin disaccharides. Releases 4-deoxy-4,5-didehydro D-glucuronic acid or 4-deoxy-4,5-didehydro L-iduronic acid from chondroitin disaccharides, hyaluronan disaccharides and heparin disaccharides and cleaves both glycosidic (1-&gt;3) and (1-&gt;4) bonds. Prefers sulfated glycosaminoglycans compared to unsulfated glycosaminoglycans. Probably required for mammalian cells invasion through the degradation of extracellular sulfated glycosaminoglycans such as chondroitin and hyaluronan. The protein is Unsaturated chondroitin disaccharide hydrolase (ugl) of Streptococcus pyogenes serotype M1.